Reading from the N-terminus, the 805-residue chain is RFX-like transcription factor daf-19 (805 aa).

Residues Met1–Leu14 are compositionally biased toward polar residues. A disordered region spans residues Met1–Asp113. The span at Lys19 to His92 shows a compositional bias: basic and acidic residues. The segment covering Asn93 to Thr104 has biased composition (polar residues). Residues Thr260–Asp334 constitute a DNA-binding region (RFX-type winged-helix).

The protein belongs to the RFX family. As to expression, ciliated sensory neurons. In terms of tissue distribution, expressed in the male tail HOB and RnB neurons but not in male-specific CEM head neurons or other ciliated neurons.

Its subcellular location is the nucleus. In terms of biological role, probable transcription factor. May regulate some genes of ciliated sensory neurons. May activate the expression of the shared components of sensory cilia, but not the cell-type-specific expression. Together with transcription factor atf-7, involved in regulation of the serotonergic response of ADF neurons to pathogenic food. Involved in male mating behavior; may play a role in functional specialization of PKD ciliated sensory neurons. This is RFX-like transcription factor daf-19 from Caenorhabditis elegans.